A 136-amino-acid polypeptide reads, in one-letter code: Large ribosomal subunit protein uL14 (136 aa).

The protein belongs to the universal ribosomal protein uL14 family.

The protein is Large ribosomal subunit protein uL14 (rpl23) of Dictyostelium discoideum (Social amoeba).